We begin with the raw amino-acid sequence, 179 residues long: Alpha-S2-casein-like A (179 aa).

The N-terminal stretch at 1 to 15 (MKFFIFTCLVAAALA) is a signal peptide. Phosphoserine is present on residues Ser-24 and Ser-25. The disordered stretch occupies residues 44 to 121 (FQTPQDSASS…NAIYDVPSQE (78 aa)). Over residues 63–74 (ISEKIEQSEEQK) the composition is skewed to basic and acidic residues. The segment covering 93 to 110 (PQICTPYQQQSSVNQRPQ) has biased composition (polar residues).

The protein belongs to the alpha-casein family. In terms of tissue distribution, mammary gland specific. Secreted in milk.

It is found in the secreted. Important role in the capacity of milk to transport calcium phosphate. The polypeptide is Alpha-S2-casein-like A (Csn1s2a) (Rattus norvegicus (Rat)).